The sequence spans 842 residues: Cullin-8 (842 aa).

The segment at 1–50 (MINESVSKREGFHESISRETSASNALGLYNKFNDERNPRYRTMIAELHEF) is required for interaction with MMS1. Residues 755–765 (LQSSNTGGERT) show a composition bias toward polar residues. Residues 755 to 775 (LQSSNTGGERTSSAHHEGSNS) form a disordered region. Lys791 is covalently cross-linked (Glycyl lysine isopeptide (Lys-Gly) (interchain with G-Cter in NEDD8)).

Belongs to the cullin family. Component of multiple cullin-RING ligases (CRLs) composed of 4 subunits: the RING protein HRT1, the cullin RTT101, a linker protein MMS1, and one of many alternative substrate receptors belonging to a protein family described as DCAF (DDB1- and CUL4-associated factor). Component of a RTT101(MMS1-MMS22) complex with the substrate receptor MMS22. This complex further interacts with RTT107 and CTF4 to form RTT101-MMS1-MMS22-RTT107 and RTT101-MMS1-MMS22-CTF4 complexes respectively. Component of a RTT101(MSS1-CRT10) complex with the substrate receptor CRT10. Component of a RTT101(MSS1-ESC2) complex with the potential substrate receptor ESC2. Component of a RTT101(MSS1-ORC5) complex with the potential substrate receptor ORC5. Interacts (via C-ter) with HRT1; required for ubiquitin-ligase activity. Interacts (via N-ter) with MMS1. Post-translationally, neddylated. HRT1-binding is necessary for RUB1/NEDD8 modification of RTT101. The modification enhances ubiquitin-ligase activity.

It is found in the cytoplasm. The protein localises to the nucleus. It functions in the pathway protein modification; protein ubiquitination. Its function is as follows. Core component of multiple cullin-RING-based E3 ubiquitin-protein ligase complexes (CRLs), which mediate the ubiquitination of target proteins. As a scaffold protein may contribute to catalysis through positioning of the substrate and the ubiquitin-conjugating enzyme. The CRL associates with CDC34 as the E2 ubiquitin-conjugating enzyme. The functional specificity of the CRL depends on the type of the associated substrate receptor protein. RTT101(MMS1-MMS22) promotes fork progression through damaged DNA or natural pause sites by stabilizing replication proteins like the replication fork-pausing complex (FPC) and leading-strand polymerase at stalled replication forks. RTT101(MMS1-MMS22) ubiquitinates the acetylated histones H3K56ac-H4 at lysine residues H3K121, H3K122 and H3K125. Ubiquitination is required for efficient histone deposition during replication-coupled nucleosome assembly, probably by facilitating the transfer of H3-H4 from ASF1 to other chaperones involved in histone deposition. RTT101(MMS1-CRT10) may regulate nucleotide synthesis through transcriptional regulation of ribonucleotide reductase. RTT101(MMS1) is also involved in the non-functional rRNA decay (NRD) of 25S rRNA through the selective, ubiquitination-dependent degradation of nonfunctional ribosomal particles. Ubiquitinates the FACT (facilitates chromatin transcription) complex subunit SPT16 in an MMS1-independent manner. Involved in regulation of Ty1 transposition and protects the genome from Ty1 integration upstream of tRNA genes. This chain is Cullin-8 (RTT101), found in Saccharomyces cerevisiae (strain ATCC 204508 / S288c) (Baker's yeast).